Here is a 414-residue protein sequence, read N- to C-terminus: Gamma-glutamyl phosphate reductase (414 aa).

The protein belongs to the gamma-glutamyl phosphate reductase family.

The protein resides in the cytoplasm. The enzyme catalyses L-glutamate 5-semialdehyde + phosphate + NADP(+) = L-glutamyl 5-phosphate + NADPH + H(+). It participates in amino-acid biosynthesis; L-proline biosynthesis; L-glutamate 5-semialdehyde from L-glutamate: step 2/2. In terms of biological role, catalyzes the NADPH-dependent reduction of L-glutamate 5-phosphate into L-glutamate 5-semialdehyde and phosphate. The product spontaneously undergoes cyclization to form 1-pyrroline-5-carboxylate. The protein is Gamma-glutamyl phosphate reductase of Xanthomonas oryzae pv. oryzae (strain KACC10331 / KXO85).